A 340-amino-acid chain; its full sequence is Spike protein P5 (340 aa).

The domain-1 stretch occupies residues alanine 2–proline 122. Positions serine 123–threonine 141 constitute a Collagen-like domain. Positions valine 142–asparagine 340 are domain-2.

Homotrimer.

The protein localises to the virion. In association with P31 and P2, forms the spike complexes located at the 5-fold vertices of the capsid. Essential for viral infectivity. The protein is Spike protein P5 (V) of Enterobacteria phage PRD1 (Bacteriophage PRD1).